Here is a 738-residue protein sequence, read N- to C-terminus: Phosphoribosylformylglycinamidine synthase subunit PurL (738 aa).

H53 is an active-site residue. ATP contacts are provided by Y56 and K95. Mg(2+) is bound at residue E97. Substrate is bound by residues 98–101 and R120; that span reads SHNH. Catalysis depends on H99, which acts as the Proton acceptor. D121 is a binding site for Mg(2+). Q244 is a binding site for substrate. D274 is a Mg(2+) binding site. A substrate-binding site is contributed by 318-320; sequence ESQ. ATP is bound by residues D499 and G536. A Mg(2+)-binding site is contributed by N537. S539 contacts substrate.

It belongs to the FGAMS family. As to quaternary structure, monomer. Part of the FGAM synthase complex composed of 1 PurL, 1 PurQ and 2 PurS subunits.

It is found in the cytoplasm. It catalyses the reaction N(2)-formyl-N(1)-(5-phospho-beta-D-ribosyl)glycinamide + L-glutamine + ATP + H2O = 2-formamido-N(1)-(5-O-phospho-beta-D-ribosyl)acetamidine + L-glutamate + ADP + phosphate + H(+). The protein operates within purine metabolism; IMP biosynthesis via de novo pathway; 5-amino-1-(5-phospho-D-ribosyl)imidazole from N(2)-formyl-N(1)-(5-phospho-D-ribosyl)glycinamide: step 1/2. In terms of biological role, part of the phosphoribosylformylglycinamidine synthase complex involved in the purines biosynthetic pathway. Catalyzes the ATP-dependent conversion of formylglycinamide ribonucleotide (FGAR) and glutamine to yield formylglycinamidine ribonucleotide (FGAM) and glutamate. The FGAM synthase complex is composed of three subunits. PurQ produces an ammonia molecule by converting glutamine to glutamate. PurL transfers the ammonia molecule to FGAR to form FGAM in an ATP-dependent manner. PurS interacts with PurQ and PurL and is thought to assist in the transfer of the ammonia molecule from PurQ to PurL. In Leuconostoc mesenteroides subsp. mesenteroides (strain ATCC 8293 / DSM 20343 / BCRC 11652 / CCM 1803 / JCM 6124 / NCDO 523 / NBRC 100496 / NCIMB 8023 / NCTC 12954 / NRRL B-1118 / 37Y), this protein is Phosphoribosylformylglycinamidine synthase subunit PurL.